A 248-amino-acid polypeptide reads, in one-letter code: 1-(5-phosphoribosyl)-5-[(5-phosphoribosylamino)methylideneamino] imidazole-4-carboxamide isomerase (248 aa).

The Proton acceptor role is filled by Asp8. The active-site Proton donor is the Asp129.

It belongs to the HisA/HisF family.

The protein resides in the cytoplasm. It carries out the reaction 1-(5-phospho-beta-D-ribosyl)-5-[(5-phospho-beta-D-ribosylamino)methylideneamino]imidazole-4-carboxamide = 5-[(5-phospho-1-deoxy-D-ribulos-1-ylimino)methylamino]-1-(5-phospho-beta-D-ribosyl)imidazole-4-carboxamide. It participates in amino-acid biosynthesis; L-histidine biosynthesis; L-histidine from 5-phospho-alpha-D-ribose 1-diphosphate: step 4/9. This chain is 1-(5-phosphoribosyl)-5-[(5-phosphoribosylamino)methylideneamino] imidazole-4-carboxamide isomerase, found in Rhizobium johnstonii (strain DSM 114642 / LMG 32736 / 3841) (Rhizobium leguminosarum bv. viciae).